A 339-amino-acid polypeptide reads, in one-letter code: Anthranilate phosphoribosyltransferase (339 aa).

Residues G81, 84–85 (GD), S89, 91–94 (NVSS), 109–117 (KHGNRALSS), and A121 each bind 5-phospho-alpha-D-ribose 1-diphosphate. G81 contributes to the anthranilate binding site. S93 contacts Mg(2+). N112 lines the anthranilate pocket. Anthranilate is bound at residue R167. Mg(2+) contacts are provided by D225 and E226.

It belongs to the anthranilate phosphoribosyltransferase family. As to quaternary structure, homodimer. It depends on Mg(2+) as a cofactor.

The enzyme catalyses N-(5-phospho-beta-D-ribosyl)anthranilate + diphosphate = 5-phospho-alpha-D-ribose 1-diphosphate + anthranilate. It participates in amino-acid biosynthesis; L-tryptophan biosynthesis; L-tryptophan from chorismate: step 2/5. Functionally, catalyzes the transfer of the phosphoribosyl group of 5-phosphorylribose-1-pyrophosphate (PRPP) to anthranilate to yield N-(5'-phosphoribosyl)-anthranilate (PRA). This is Anthranilate phosphoribosyltransferase from Brucella ovis (strain ATCC 25840 / 63/290 / NCTC 10512).